We begin with the raw amino-acid sequence, 273 residues long: Hydroxyethylthiazole kinase (273 aa).

M41 contributes to the substrate binding site. ATP-binding residues include R117 and T170. Position 197 (G197) interacts with substrate.

The protein belongs to the Thz kinase family. Mg(2+) serves as cofactor.

The enzyme catalyses 5-(2-hydroxyethyl)-4-methylthiazole + ATP = 4-methyl-5-(2-phosphooxyethyl)-thiazole + ADP + H(+). Its pathway is cofactor biosynthesis; thiamine diphosphate biosynthesis; 4-methyl-5-(2-phosphoethyl)-thiazole from 5-(2-hydroxyethyl)-4-methylthiazole: step 1/1. Catalyzes the phosphorylation of the hydroxyl group of 4-methyl-5-beta-hydroxyethylthiazole (THZ). The chain is Hydroxyethylthiazole kinase from Clostridium acetobutylicum (strain ATCC 824 / DSM 792 / JCM 1419 / IAM 19013 / LMG 5710 / NBRC 13948 / NRRL B-527 / VKM B-1787 / 2291 / W).